We begin with the raw amino-acid sequence, 286 residues long: MIQDILNRYLFDNADVRGELVQLQDSYQQVIGSHAYPPVLQILLGELLAATSLLTATLKFSGDISVQLQGNGPVSLAVINGNNQQQLRGIARWEGELADDASLADLFGQGYMVITLTPDEGERYQGVVALDKPTLAACVEDYFNQSEQLPTALWLFADGKQAAGMFLQVLPSQEDHNADFEHLCQLTATIKAEELFTLDAQDILHRLYHQEEVRLFDPIEVSFKCTCSRERSAAAIKTIDQAEVEAILAEDGKVEMGCEYCNAKYVFDGIDIAAIYANGTGSNTQQ.

Disulfide bonds link Cys-225–Cys-227 and Cys-258–Cys-261.

Belongs to the HSP33 family. Under oxidizing conditions two disulfide bonds are formed involving the reactive cysteines. Under reducing conditions zinc is bound to the reactive cysteines and the protein is inactive.

Its subcellular location is the cytoplasm. Its function is as follows. Redox regulated molecular chaperone. Protects both thermally unfolding and oxidatively damaged proteins from irreversible aggregation. Plays an important role in the bacterial defense system toward oxidative stress. The chain is 33 kDa chaperonin from Shewanella sp. (strain ANA-3).